Reading from the N-terminus, the 333-residue chain is 4-hydroxy-3-methylbut-2-enyl diphosphate reductase (333 aa).

Cys34 contributes to the [4Fe-4S] cluster binding site. Positions 63 and 96 each coordinate (2E)-4-hydroxy-3-methylbut-2-enyl diphosphate. Residues His63 and His96 each coordinate dimethylallyl diphosphate. The isopentenyl diphosphate site is built by His63 and His96. Residue Cys118 participates in [4Fe-4S] cluster binding. Position 146 (His146) interacts with (2E)-4-hydroxy-3-methylbut-2-enyl diphosphate. Dimethylallyl diphosphate is bound at residue His146. Residue His146 participates in isopentenyl diphosphate binding. The active-site Proton donor is Glu148. Thr186 serves as a coordination point for (2E)-4-hydroxy-3-methylbut-2-enyl diphosphate. [4Fe-4S] cluster is bound at residue Cys216. Residues Ser244, Ser245, Asn246, and Ser289 each contribute to the (2E)-4-hydroxy-3-methylbut-2-enyl diphosphate site. Ser244, Ser245, Asn246, and Ser289 together coordinate dimethylallyl diphosphate. Residues Ser244, Ser245, Asn246, and Ser289 each contribute to the isopentenyl diphosphate site.

This sequence belongs to the IspH family. It depends on [4Fe-4S] cluster as a cofactor.

The catalysed reaction is isopentenyl diphosphate + 2 oxidized [2Fe-2S]-[ferredoxin] + H2O = (2E)-4-hydroxy-3-methylbut-2-enyl diphosphate + 2 reduced [2Fe-2S]-[ferredoxin] + 2 H(+). It catalyses the reaction dimethylallyl diphosphate + 2 oxidized [2Fe-2S]-[ferredoxin] + H2O = (2E)-4-hydroxy-3-methylbut-2-enyl diphosphate + 2 reduced [2Fe-2S]-[ferredoxin] + 2 H(+). It functions in the pathway isoprenoid biosynthesis; dimethylallyl diphosphate biosynthesis; dimethylallyl diphosphate from (2E)-4-hydroxy-3-methylbutenyl diphosphate: step 1/1. Its pathway is isoprenoid biosynthesis; isopentenyl diphosphate biosynthesis via DXP pathway; isopentenyl diphosphate from 1-deoxy-D-xylulose 5-phosphate: step 6/6. Its function is as follows. Catalyzes the conversion of 1-hydroxy-2-methyl-2-(E)-butenyl 4-diphosphate (HMBPP) into a mixture of isopentenyl diphosphate (IPP) and dimethylallyl diphosphate (DMAPP). Acts in the terminal step of the DOXP/MEP pathway for isoprenoid precursor biosynthesis. This is 4-hydroxy-3-methylbut-2-enyl diphosphate reductase from Mycolicibacterium gilvum (strain PYR-GCK) (Mycobacterium gilvum (strain PYR-GCK)).